Reading from the N-terminus, the 848-residue chain is Beta-galactosidase 11 (848 aa).

An N-terminal signal peptide occupies residues 1–23; sequence MSAAAVLAVVAAAVAALAAAASG. Asn29 carries N-linked (GlcNAc...) asparagine glycosylation. The active-site Proton donor is the Glu189. Glu260 acts as the Nucleophile in catalysis. Residues Asn261, Asn472, and Asn783 are each glycosylated (N-linked (GlcNAc...) asparagine). The 88-residue stretch at 750-837 folds into the SUEL-type lectin domain; it reads GGLKPTAVLS…GTLAVQAKCS (88 aa).

It belongs to the glycosyl hydrolase 35 family.

The protein localises to the secreted. It is found in the extracellular space. Its subcellular location is the apoplast. The catalysed reaction is Hydrolysis of terminal non-reducing beta-D-galactose residues in beta-D-galactosides.. This Oryza sativa subsp. japonica (Rice) protein is Beta-galactosidase 11.